The following is a 315-amino-acid chain: Calumenin (315 aa).

The first 19 residues, 1–19 (MDLRQFLMCLSLCTAFALS), serve as a signal peptide directing secretion. S44 is subject to Phosphoserine. Residue Y47 is modified to Phosphotyrosine. Residue T65 is modified to Phosphothreonine. EF-hand domains follow at residues 68 to 103 (ESKE…AQKR), 104 to 139 (WIYE…YVLD), 151 to 186 (QMMV…EEYD), 188 to 223 (MKDI…HDGN), 229 to 264 (WVKT…SDYD), and 265 to 300 (HAEA…FVGS). A Phosphoserine; by FAM20C modification is found at S69. The Ca(2+) site is built by D81, D83, D85, E92, D117, N119, D121, and E128. N-linked (GlcNAc...) (complex) asparagine glycosylation is present at N131. A Ca(2+)-binding site is contributed by D164. The residue at position 165 (K165) is an N6-acetyllysine. Residues D166, D168, E175, D201, N203, D205, E212, D242, N244, D246, K248, and E253 each contribute to the Ca(2+) site. T254 carries the phosphothreonine modification. S261 and S277 each carry phosphoserine. Ca(2+)-binding residues include D278, N280, D282, K284, and E289. Residues 312–315 (HDEF) carry the Prevents secretion from ER motif.

The protein belongs to the CREC family. As to quaternary structure, interacts with GGCX. In terms of tissue distribution, ubiquitously expressed. Expressed at high levels in heart, placenta and skeletal muscle, at lower levels in lung, kidney and pancreas and at very low levels in brain and liver.

The protein resides in the endoplasmic reticulum membrane. The protein localises to the golgi apparatus. Its subcellular location is the secreted. It is found in the melanosome. It localises to the sarcoplasmic reticulum lumen. In terms of biological role, involved in regulation of vitamin K-dependent carboxylation of multiple N-terminal glutamate residues. Seems to inhibit gamma-carboxylase GGCX. Binds 7 calcium ions with a low affinity. The polypeptide is Calumenin (CALU) (Homo sapiens (Human)).